The chain runs to 1259 residues: Translocation and assembly module subunit TamB (1259 aa).

Residue Met-1 is modified to N-formylmethionine. Topologically, residues 1 to 6 (MSLWKK) are cytoplasmic. Residues 7-27 (ISLGVVIVILLLLGSVAFLVG) form a helical; Signal-anchor for type II membrane protein membrane-spanning segment. At 28–1259 (TTSGLHLVFK…ALDLLYQFEF (1232 aa)) the chain is on the periplasmic side.

Belongs to the TamB family. As to quaternary structure, interacts with TamA to form the translocation and assembly module (TAM).

The protein localises to the cell inner membrane. In terms of biological role, component of the translocation and assembly module (TAM), which facilitates the insertion and assembly of specific beta-barrel proteins into the outer membrane. Promotes the assembly and secretion across the outer membrane of a subset of autotransporters, such as Ag43. Involved in the assembly of the outer membrane usher protein FimD. In vitro, when TAM is reconstituted into preformed liposomes, it can promote the assembly of several outer membrane proteins, including OmpA, EspP, Ag43 and FadL. TamA is sufficient to catalyze a low level of outer membrane protein (OMP) assembly, but both TamA and TamB are required for efficient OMP assembly. TamB may regulate TamA activity. It could regulate conformational changes in TamA to drive its function in OMP assembly. It could also act as a chaperone that facilitate the transport of nascent membrane proteins across the periplasm to TamA in the outer membrane. Functionally, in addition, is involved in outer membrane lipid homeostasis. Likely transports phospholipids between the inner membrane and the outer membrane. It would provide a bridge-like structure that protects phospholipids as they travel across the periplasm. One possible explanation for the apparent dual function of TAM is that TamB is a somewhat generic transporter of hydrophobic molecules. Its function is as follows. TamB, YdbH and YhdP are redundant, but not equivalent, in performing an essential function for growth and maintaining lipid homeostasis in the outer membrane. The transport functions of TamB and YhdP could be differentiated according to the fatty acid saturation state of the phospholipids, with TamB transporting more unsaturated phospholipids and YhdP more saturated phospholipids. Any of these three proteins is sufficient for growth. This is Translocation and assembly module subunit TamB from Escherichia coli (strain K12).